The following is a 159-amino-acid chain: Small ribosomal subunit protein uS15 (159 aa).

A compositionally biased stretch (basic residues) spans Met-1–Val-16. A disordered region spans residues Met-1–Arg-22.

Belongs to the universal ribosomal protein uS15 family. Part of the 30S ribosomal subunit.

The chain is Small ribosomal subunit protein uS15 from Ignicoccus hospitalis (strain KIN4/I / DSM 18386 / JCM 14125).